Here is a 218-residue protein sequence, read N- to C-terminus: Phosphoglycolate phosphatase (218 aa).

Catalysis depends on Asp-7, which acts as the Nucleophile. 3 residues coordinate Mg(2+): Asp-7, Asp-9, and Asp-167.

It belongs to the HAD-like hydrolase superfamily. CbbY/CbbZ/Gph/YieH family. It depends on Mg(2+) as a cofactor.

It carries out the reaction 2-phosphoglycolate + H2O = glycolate + phosphate. The protein operates within organic acid metabolism; glycolate biosynthesis; glycolate from 2-phosphoglycolate: step 1/1. In terms of biological role, specifically catalyzes the dephosphorylation of 2-phosphoglycolate. Is involved in the dissimilation of the intracellular 2-phosphoglycolate formed during the DNA repair of 3'-phosphoglycolate ends, a major class of DNA lesions induced by oxidative stress. The protein is Phosphoglycolate phosphatase of Cereibacter sphaeroides (strain ATCC 17025 / ATH 2.4.3) (Rhodobacter sphaeroides).